The primary structure comprises 134 residues: D-dopachrome decarboxylase-like protein (134 aa).

Belongs to the MIF family.

The protein resides in the cytoplasm. Functionally, may have lyase activity. The sequence is that of D-dopachrome decarboxylase-like protein (DDTL) from Homo sapiens (Human).